The following is a 383-amino-acid chain: MIISSGNDYRAAAQRRLPPFLFHYIDGGAYAEYTLKRNVQDLSEIALRQRVLNDMSALSLETKLFNETLSMPVALAPVGLTGMYARRGEVQAAMAADKKGIPFTLSTVSVCPIEEVAPAINRPMWFQLYVLRDRGFMRNALERAKAAGCSTLVFTVDMPVPGARYRDAHSGMSGPNAAMRRYMQSVFHPHWSWNVGLMGRPHDLGNISKYLGKPTGLEDYIGWLGSNFDPSISWKDLEWIREFWDGPMVIKGILDPEDAKDAVRFGADGIVVSNHGGRQLDGVMSSARALPAIADAVKGDLAILADSGIRNGLDVVRMLALGADTVLLGRAFVYALAAAGGQGVSNLLDLIDKEMRVAMTLTGAKSISDINTDCLVQAIKQGL.

The region spanning 1–380 is the FMN hydroxy acid dehydrogenase domain; it reads MIISSGNDYR…NTDCLVQAIK (380 aa). Tyr-24 contacts substrate. Ser-106 and Gln-127 together coordinate FMN. Tyr-129 contributes to the substrate binding site. Thr-155 contributes to the FMN binding site. Residue Arg-164 coordinates substrate. Lys-251 serves as a coordination point for FMN. The active-site Proton acceptor is the His-275. Arg-278 contacts substrate. FMN is bound at residue 306–330; sequence DSGIRNGLDVVRMLALGADTVLLGR.

Belongs to the FMN-dependent alpha-hydroxy acid dehydrogenase family. It depends on FMN as a cofactor.

It localises to the cell inner membrane. The catalysed reaction is (S)-lactate + A = pyruvate + AH2. In terms of biological role, catalyzes the conversion of L-lactate to pyruvate. Is coupled to the respiratory chain. This is L-lactate dehydrogenase from Acinetobacter baumannii (strain SDF).